We begin with the raw amino-acid sequence, 741 residues long: Prestin (741 aa).

Residues 1 to 79 (MDHVEETEIL…WLPAYRFKEY (79 aa)) are Cytoplasmic-facing. Residues 80-105 (VLGDIVSGISTGVLQLPQGLAFAMLA) form a helical membrane-spanning segment. The Extracellular segment spans residues 106-109 (AVPP). Residues 110–125 (VFGLYSSFYPVIMYCF) form a helical membrane-spanning segment. Topologically, residues 126-137 (FGTSRHISIGPF) are cytoplasmic. The chain crosses the membrane as a helical span at residues 138-147 (AVISLMIGGV). The Extracellular segment spans residues 148-178 (AVRLVPDDIVIPGGVNATNSTEARDALRVKV). Positions 158 to 168 (IPGGVNATNST) match the Involved in motor function motif. Asn163 and Asn166 each carry an N-linked (GlcNAc...) asparagine glycan. 2 helical membrane passes run 179–208 (AMSVTLLTGIIQFCLGVCRFGFVAIYLTEP) and 209–230 (LVRGFTTAAAVHVFTSMLKYLF). Topologically, residues 231–243 (GVKTKRYSGIFSV) are extracellular. The helical intramembrane region spans 244–248 (VYSTV). Over 249-261 (AVLQNVKNLNVCS) the chain is Extracellular. The helical transmembrane segment at 262 to 283 (LGVGLMVFGLLLGGKEFNERFK) threads the bilayer. The Cytoplasmic segment spans residues 284–291 (EKLPAPIP). A helical transmembrane segment spans residues 292–303 (LEFFAVVMGTGI). Residues 304-338 (SAGFSLHESYNVDVVGTLPLGLLPPANPDTSLFHL) lie on the Extracellular side of the membrane. The chain crosses the membrane as a helical span at residues 339 to 361 (VYVDAIAIAIVGFSVTISMAKTL). The Cytoplasmic segment spans residues 362-370 (ANKHGYQVD). Residues 371–388 (GNQELIALGLCNSTGSLF) traverse the membrane as a helical segment. The Extracellular segment spans residues 389-396 (QTFAISCS). Residues 397 to 406 (LSRSLVQEGT) form a helical membrane-spanning segment. Ser398 serves as a coordination point for salicylate. The Cytoplasmic segment spans residues 407-410 (GGKT). A helical membrane pass occupies residues 411–429 (QLAGCLASLMILLVILATG). The Extracellular segment spans residues 430 to 436 (FLFESLP). Residues 437–459 (QAVLSAIVIVNLKGMFMQFSDLP) form a helical membrane-spanning segment. Over 460-467 (FFWRTSKI) the chain is Cytoplasmic. Residues 468-483 (ELTIWLTTFVSSLFLG) traverse the membrane as a helical segment. Leu484 is a topological domain (extracellular). The helical transmembrane segment at 485–498 (DYGLITAVIIALMT) threads the bilayer. Over 499-741 (VIYRTQSPSY…DSEPNATPEA (243 aa)) the chain is Cytoplasmic. Residues 505–718 (SPSYIVLGQL…AVLGSQVREA (214 aa)) form an extended region for STAS domain region. The STAS domain occupies 525-713 (AYEEVKEVPG…HSIHDAVLGS (189 aa)). Positions 718–741 (ALAEQEATAAPPQEDSEPNATPEA) are disordered. The span at 721 to 730 (EQEATAAPPQ) shows a compositional bias: low complexity.

It belongs to the SLC26A/SulP transporter (TC 2.A.53) family. In terms of assembly, homodimer. Interacts (via STAS domain) with CALM; this interaction is calcium-dependent and the STAS domain interacts with only one lobe of CALM which is an elongated conformation.

The protein resides in the cell membrane. It catalyses the reaction 2 hydrogencarbonate(in) + chloride(out) = 2 hydrogencarbonate(out) + chloride(in). Its function is as follows. Voltage-sensitive motor protein that drives outer hair cell (OHC) electromotility (eM) and participates in sound amplification in the hearing organ. Converts changes in the transmembrane electric potential into mechanical displacements resulting in the coupling of its expansion to movement of a charged voltage sensor across the lipid membrane. The nature of the voltage sensor is not completely clear, and two models compete. In the first model, acts as an incomplete transporter where intracellular chloride anion acts as extrinsic voltage sensor that drives conformational change in the protein which is sufficient to produce a length change in the plane of the membrane and hence in the length of the OHC. The second model in which multiple charged amino acid residues are distributed at the intracellular and extracellular membrane interfaces that form an intrinsic voltage sensor, whose movement produces the non-linear capacitance (NLC). However, the effective voltage sensor may be the result of a hybrid voltage sensor assembled from intrinsic charge (charged residues) and extrinsic charge (bound anion). Notably, binding of anions to the anion-binding pocket partially neutralizes the intrinsic positive charge rather than to form an electrically negative sensor, therefore remaining charge may serve as voltage sensor that, after depolarization, moves from down (expanded state) to up (contracted) conformation, which is accompanied by an eccentric contraction of the intermembrane cross-sectional area of the protein as well as a major increase in the hydrophobic thickness of the protein having as consequences the plasma membrane thickening and the cell contraction after membrane depolarization. The anion-binding pocket transits from the inward-open (Down) state, where it is exposed toward the intracellular solvent in the absence of anion, to the occluded (Up) state upon anion binding. Salicylate competes for the anion-binding site and inhibits the voltage-sensor movement, and therefore inhibits the charge transfer and electromotility by displacing Cl(-) from the anion-binding site and by preventing the structural transitions to the contracted state. In addition, can act as a weak Cl(-)/HCO3 (-) antiporter across the cell membrane and so regulate the intracellular pH of the outer hair cells (OHCs), while firstly found as being unable to mediate electrogenic anion transport. Moreover, supports a role in cardiac mechanical amplification serving as an elastic element to enhance the actomyosin- based sarcomere contraction system. The sequence is that of Prestin from Tursiops truncatus (Atlantic bottle-nosed dolphin).